A 350-amino-acid chain; its full sequence is tRNA uridine(34) hydroxylase (350 aa).

The 95-residue stretch at 146–240 (DDPDAVFIDM…YARRAREQGL (95 aa)) folds into the Rhodanese domain. Residue C200 is the Cysteine persulfide intermediate of the active site. The segment covering 319–328 (RRRRAGRENG) has biased composition (basic and acidic residues). The segment at 319–350 (RRRRAGRENGNKIFNKSRGRLNSKLSIPDPAE) is disordered.

It belongs to the TrhO family.

It carries out the reaction uridine(34) in tRNA + AH2 + O2 = 5-hydroxyuridine(34) in tRNA + A + H2O. In terms of biological role, catalyzes oxygen-dependent 5-hydroxyuridine (ho5U) modification at position 34 in tRNAs. The polypeptide is tRNA uridine(34) hydroxylase (Salmonella heidelberg (strain SL476)).